A 197-amino-acid chain; its full sequence is LexA repressor (197 aa).

Positions 28–47 (VREIARRFRITPRGAQLHLV) form a DNA-binding region, H-T-H motif. Catalysis depends on for autocatalytic cleavage activity residues Ser119 and Lys156.

This sequence belongs to the peptidase S24 family. As to quaternary structure, homodimer.

It carries out the reaction Hydrolysis of Ala-|-Gly bond in repressor LexA.. Represses a number of genes involved in the response to DNA damage (SOS response), including recA and lexA. In the presence of single-stranded DNA, RecA interacts with LexA causing an autocatalytic cleavage which disrupts the DNA-binding part of LexA, leading to derepression of the SOS regulon and eventually DNA repair. In Thermotoga neapolitana, this protein is LexA repressor.